Here is a 1013-residue protein sequence, read N- to C-terminus: Trehalose monomycolate exporter MmpL3 (1013 aa).

At 1–14 the chain is on the cytoplasmic side; it reads MFAWWGRTVYQFRY. Residues 15 to 35 traverse the membrane as a helical segment; it reads IVIGVMVALCLGGGVYGISLG. Topologically, residues 36–196 are periplasmic; it reads NHVTQSGFYD…KRAEVAAIPL (161 aa). 40 to 44 lines the a 1,2-diacylglycero-3-phosphoethanolamine pocket; it reads QSGFY. A run of 2 helical transmembrane segments spans residues 197-217 and 218-238; these read VAVVLFFVFGTVIAAALPAII and GGLAIAGALGIMRLVAEFTPV. Residues 239-240 are Periplasmic-facing; the sequence is HF. A helical membrane pass occupies residues 241 to 261; sequence FAQPVVTLIGLGIAIDYGLFI. Residues 262 to 290 lie on the Cytoplasmic side of the membrane; it reads VSRFREEIAEGYDTEAAVRRTVMTSGRTV. Residues 291–311 form a helical membrane-spanning segment; sequence VFSAVIIVASSVPLLLFPQGF. Residues 312–317 lie on the Periplasmic side of the membrane; that stretch reads LKSITY. A helical membrane pass occupies residues 318-338; the sequence is AIIASVMLAAILSITVLAAAL. The Cytoplasmic segment spans residues 339-401; the sequence is AILGPRVDAL…RLVNVVMKRP (63 aa). A helical transmembrane segment spans residues 402–422; the sequence is IAFAAPILVVMVLLIIPLGQL. Residues 423–567 are Periplasmic-facing; sequence SLGGISEKYL…HSLFDKLPLM (145 aa). Residues 485–513 are disordered; that stretch reads SGFTDPDNDPEKMWKERPANDSGSKDPSV. The span at 493 to 512 shows a compositional bias: basic and acidic residues; that stretch reads DPEKMWKERPANDSGSKDPS. A helical transmembrane segment spans residues 568–588; sequence ALILIVTTTVLMFLAFGSVVL. Residues 589–591 are Cytoplasmic-facing; sequence PIK. Residues 592–612 form a helical membrane-spanning segment; it reads AALMSALTLGSTMGILTWMFV. Residues 613–630 lie on the Periplasmic side of the membrane; sequence DGHGSGLMNYTPQPLMAP. The chain crosses the membrane as a helical span at residues 631–651; that stretch reads MIGLIIAVIWGLSTDYEVFLV. Residue aspartate 645 participates in SQ109 binding. At 652–678 the chain is on the cytoplasmic side; it reads SRMVEARERGMSTAEAIRIGTATTGRL. A helical transmembrane segment spans residues 679-699; that stretch reads ITGAALILAVVAGAFVFSDLV. Topologically, residues 700–703 are periplasmic; it reads MMKY. A helical membrane pass occupies residues 704 to 724; it reads LAFGLLIALLLDATIIRMFLV. Topologically, residues 725-1013 are cytoplasmic; it reads PAVMKLLGDD…QDLLRREGRL (289 aa). Residues 754 to 1013 are disordered; sequence TELPDERKRP…QDLLRREGRL (260 aa). Residues 757 to 772 are compositionally biased toward basic and acidic residues; that stretch reads PDERKRPTVRESETDQ. 2 stretches are compositionally biased toward pro residues: residues 792–803 and 820–829; these read HPAPEPVRPMPP and PPQPPQPPQA. A compositionally biased stretch (low complexity) spans 842–867; sequence RFAMARNAVRNAVNSAVHGGAGSAAA. Residues 875 to 885 show a composition bias toward pro residues; it reads PGGPAQPPAPP. The segment covering 973–996 has biased composition (basic and acidic residues); it reads REQEPSTEKLNTREDAPEDPETKR.

Belongs to the resistance-nodulation-cell division (RND) (TC 2.A.6) family. MmpL subfamily. Monomer. Interacts with TtfA (via N-terminus); active trehalose monomycolate (TMM) biosynthesis is not required for the complex formation. Interacts with MSMEG_5308.

The protein localises to the cell inner membrane. The protein resides in the cell septum. It is found in the cell tip. Inhibited by the antimycobacterial compound BM212, a pyrrole derivative. Inhibited by the antitubercular drug SQ109. Inhibited by the adamantyl urea derivative AU1235, the indole carboxamide ICA38 and rimonabant, the antagonist for the cannabinoid receptor CB1. The dissociation constant (Kd) values for SQ109, AU1235, ICA38 and rimonabant are 1.65 uM, 0.29, 0.16 and 29.5, respectively. Inhibitory effects are due to binding of the inhibitors at the proton-transportation channel most likely dissipating the transmembrane electrochemical proton gradient needed for substrate translocation. Functionally, transports trehalose monomycolate (TMM) to the cell wall. Flips TMM across the inner membrane. Membrane potential is not required for this function. Transports probably phosphatidylethanolamine (PE) as well. Binds specifically both TMM and PE, but not trehalose dimycolate (TDM). Also binds diacylglycerol (DAG) and other phospholipids, including phosphatidylglycerol (PG), phosphatidylinositol (PI), and cardiolipin (CDL). Contributes to membrane potential, cell wall composition, antibiotic susceptibility and fitness. This is Trehalose monomycolate exporter MmpL3 from Mycolicibacterium smegmatis (strain ATCC 700084 / mc(2)155) (Mycobacterium smegmatis).